The primary structure comprises 595 residues: MEKLSTAASLFGVVVAATALAMAVVGGEAAVVEQTFMVHEMNVTHLCNTTKIYVVNGRFPGPTVDVTEGDTVVVHVINRLPHGLTIHWHGVRQMRSCWADGAGYVTECPIHPGGEKTYRFNVTGQVGTLWWHAHVTCLRATINGAFIIRPRDGKYPFPTPAKDVPIIIGEWWELDLIELDRRMLDGNFDDNPLSATINGKLGDLSNCSGTVEESFVLDVKRGESYLLRVINTALFSEYYFKVAGHTFTVVGADGNYLTPYKTDMVTVAPGEAIDVLMFADAPPAYYHMVALANQPPPPDLQIPQLTSRGLVRYTGAAMDSNNLPMPMPVMPDQHNTMPSYYFRRNLTGLALPEQQQRHRVPAHVDERLLITLGLGSICRGGNTTTCKRGRSPETVVVATMNNVSFHHTNATALLEHYYDGTPEGVYTEDFPVRPPRPFNYTDRELIPAGPLEAALEPTAKAMRLRRFRYNASVEIVFQSTTLLQSDSNPMHLHGYDVFVLAQGLGNFDPKRDVEKFNYHNPQLRNTVQVPRGGWAAVRFLTDNPGMWYLHCHFEFHIIMGMATAFIVEDGPTPETSLPPPPPEFKRCGTNGLSQP.

Positions 1–29 are cleaved as a signal peptide; the sequence is MEKLSTAASLFGVVVAATALAMAVVGGEA. 2 consecutive Plastocyanin-like domains span residues 37-153 and 162-316; these read MVHE…PRDG and KDVP…YTGA. 2 N-linked (GlcNAc...) asparagine glycosylation sites follow: asparagine 42 and asparagine 48. Cu cation contacts are provided by histidine 87 and histidine 89. Asparagine 121 carries N-linked (GlcNAc...) asparagine glycosylation. 2 residues coordinate Cu cation: histidine 132 and histidine 134. N-linked (GlcNAc...) asparagine glycosylation is found at asparagine 206, asparagine 345, asparagine 382, asparagine 402, asparagine 409, asparagine 439, and asparagine 470. Residues 429–571 form the Plastocyanin-like 3 domain; the sequence is DFPVRPPRPF…ATAFIVEDGP (143 aa). The Cu cation site is built by asparagine 488, histidine 491, histidine 493, histidine 550, cysteine 551, histidine 552, histidine 556, and methionine 561. The segment at 570-595 is disordered; that stretch reads GPTPETSLPPPPPEFKRCGTNGLSQP.

The protein belongs to the multicopper oxidase family. The cofactor is Cu cation.

The protein resides in the secreted. It localises to the extracellular space. Its subcellular location is the apoplast. The enzyme catalyses 4 hydroquinone + O2 = 4 benzosemiquinone + 2 H2O. Functionally, lignin degradation and detoxification of lignin-derived products. The sequence is that of Putative laccase-18 (LAC18) from Oryza sativa subsp. indica (Rice).